The sequence spans 382 residues: Palmitoyltransferase ZDHHC16B (382 aa).

Residues 1–75 are Cytoplasmic-facing; it reads MRSWRWSVSR…IYWLVDNMTR (75 aa). A helical transmembrane segment spans residues 76–96; sequence WFGVVFVCLVMALTSSVVVIV. Residues 97-107 are Lumenal-facing; sequence YLCVLPIIFSS. A helical transmembrane segment spans residues 108-130; it reads YPVYWILWHLCYGHWNLLMVVFH. The Cytoplasmic portion of the chain corresponds to 131-196; the sequence is YYKATTTQPG…NNCVGHFNHR (66 aa). The 51-residue stretch at 153–203 folds into the DHHC domain; it reads TICKKCIVPKPARTHHCSICNRCILKMDHHCPWLNNCVGHFNHRYFFSFCL. Catalysis depends on cysteine 183, which acts as the S-palmitoyl cysteine intermediate. Residues 197–217 traverse the membrane as a helical segment; the sequence is YFFSFCLFMTMGCVYCSISAK. Topologically, residues 218–275 are lumenal; that stretch reads DMFLDAYNAIESGRYKGGASQGEAVPGAGLIYISFQHQSSYQTPPPAFTHQERMVHKS. A helical transmembrane segment spans residues 276–296; the sequence is LVYLWVLTSSVAVALGALTLW. Topologically, residues 297–382 are cytoplasmic; the sequence is HAILITRGET…PAYKSSTTAI (86 aa).

This sequence belongs to the DHHC palmitoyltransferase family.

The protein localises to the endoplasmic reticulum membrane. The enzyme catalyses L-cysteinyl-[protein] + hexadecanoyl-CoA = S-hexadecanoyl-L-cysteinyl-[protein] + CoA. Functionally, palmitoyl acyltransferase that mediates palmitoylation of proteins and is required during embryonic heart development. Involved in the proliferation of neural stem cells by regulating the FGF/ERK pathway. This Danio rerio (Zebrafish) protein is Palmitoyltransferase ZDHHC16B.